The sequence spans 260 residues: 3'-5' ssDNA/RNA exonuclease TatD (260 aa).

The a divalent metal cation site is built by glutamate 91, histidine 127, and histidine 152.

This sequence belongs to the metallo-dependent hydrolases superfamily. TatD-type hydrolase family. TatD subfamily. As to quaternary structure, monomer. Mg(2+) serves as cofactor.

It localises to the cytoplasm. Functionally, 3'-5' exonuclease that prefers single-stranded DNA and RNA. May play a role in the H(2)O(2)-induced DNA damage repair. This Shigella flexneri serotype 5b (strain 8401) protein is 3'-5' ssDNA/RNA exonuclease TatD.